The following is an 88-amino-acid chain: UPF0335 protein M446_5200 (88 aa).

Belongs to the UPF0335 family.

The sequence is that of UPF0335 protein M446_5200 from Methylobacterium sp. (strain 4-46).